The chain runs to 220 residues: GTP-binding nuclear protein GSP2/CNR2 (220 aa).

N-acetylserine is present on S2. S2 bears the Phosphoserine mark. In terms of domain architecture, Small GTPase Ran-type spans 10-174; it reads EVPTFKLVLV…LWLARKLAGN (165 aa). 21–28 is a binding site for GTP; sequence DGGTGKTT. The switch-I stretch occupies residues 40–48; sequence KKYIATIGV. Residues G71, 125–128, and 153–155 contribute to the GTP site; these read NKVD and SAK. A switch-II region spans residues 71-87; the sequence is GQEKFGGLRDGYYINAQ.

It belongs to the small GTPase superfamily. Ran family. Found in a nuclear export complex with RanGTP, exportin and pre-miRNA.

The protein localises to the nucleus. In terms of biological role, GTP-binding protein involved in nucleocytoplasmic transport. Required for the import of protein into the nucleus and also for RNA export. Not essential for cell viability. The chain is GTP-binding nuclear protein GSP2/CNR2 (GSP2) from Saccharomyces cerevisiae (strain ATCC 204508 / S288c) (Baker's yeast).